The chain runs to 431 residues: Metal-binding activator 1 (431 aa).

The segment at residues 1 to 40 (MILIDDIKYACMECVRGHRSSSCKHHERPLLQVRSKGRPG) is a DNA-binding region (copper-fist). Residues C11, C14, C23, and H25 each coordinate Zn(2+).

It localises to the nucleus. Its function is as follows. Copper ion-sensing transcription factor which activates transcription of the CTR1 copper transporter under low-copper conditions. Promotes filamentous and invasive growth. This Candida albicans (strain SC5314 / ATCC MYA-2876) (Yeast) protein is Metal-binding activator 1 (MAC1).